The chain runs to 89 residues: Small ribosomal subunit protein uS15 (89 aa).

Belongs to the universal ribosomal protein uS15 family. As to quaternary structure, part of the 30S ribosomal subunit. Forms a bridge to the 50S subunit in the 70S ribosome, contacting the 23S rRNA.

In terms of biological role, one of the primary rRNA binding proteins, it binds directly to 16S rRNA where it helps nucleate assembly of the platform of the 30S subunit by binding and bridging several RNA helices of the 16S rRNA. Forms an intersubunit bridge (bridge B4) with the 23S rRNA of the 50S subunit in the ribosome. This Ureaplasma parvum serovar 3 (strain ATCC 27815 / 27 / NCTC 11736) protein is Small ribosomal subunit protein uS15.